Here is a 171-residue protein sequence, read N- to C-terminus: Stage III sporulation protein AB (171 aa).

The polypeptide is Stage III sporulation protein AB (spoIIIAB) (Bacillus subtilis (strain 168)).